A 651-amino-acid chain; its full sequence is Intraflagellar transport protein 70A (651 aa).

TPR repeat units follow at residues 8–41 (DGEYTATVYKMIKEGRYGDAIHILSKEHQKHTKS), 42–75 (RAALSLLGYCYYHMQDFTNAAECYEQLTQLHPEV), 140–173 (PDYDVDLGCLLYKEGEFEEACKKFMSSMNVLGYQ), 175–207 (DLAYNIALCYYSLKQYASALKYIAEIIERGIRE), 379–410 (VTKQVQEARHNRDDESLKKYVQDYDEVLEKYI), 411–443 (PVLMAQAKIYWNRENYSMVEKIFHKSLEFCNEH), and 445–478 (TWKLNVAHVLFMQDNKYKEAIGFYEPIVKKHYEN). A coiled-coil region spans residues 494–521 (YIMTSQNEEAEELMRKIEKEEEQISYDD). A TPR 8 repeat occupies 530-563 (CIVNLVIGTLYCAKGNYDFGISRVIKSLEPYNKK).

It belongs to the TTC30/dfy-1/fleer family. In terms of tissue distribution, localizes to the cilia of many ciliated epithelial cell types including pronephric cells, olfactory placode, the brain ventricle and lateral line organs.

It is found in the cell projection. It localises to the cilium. In terms of biological role, plays a role in anterograde intraflagellar transport (IFT), the process by which cilia precursors are transported from the base of the cilium to the site of their incorporation at the tip. Required for polyglutamylation of axonemal tubulin, which is a prerequisite for correct assembly of cilia and for normal cilia beat amplitude. Does not seem to be required for neuronal microtubule polyglutamylation. The chain is Intraflagellar transport protein 70A (ift70a) from Danio rerio (Zebrafish).